A 363-amino-acid chain; its full sequence is Putative glutamate--cysteine ligase 2 (363 aa).

Belongs to the glutamate--cysteine ligase type 2 family. YbdK subfamily.

It carries out the reaction L-cysteine + L-glutamate + ATP = gamma-L-glutamyl-L-cysteine + ADP + phosphate + H(+). In terms of biological role, ATP-dependent carboxylate-amine ligase which exhibits weak glutamate--cysteine ligase activity. The sequence is that of Putative glutamate--cysteine ligase 2 from Streptomyces coelicolor (strain ATCC BAA-471 / A3(2) / M145).